We begin with the raw amino-acid sequence, 192 residues long: Protein GrpE (192 aa).

It belongs to the GrpE family. In terms of assembly, homodimer.

The protein resides in the cytoplasm. Its function is as follows. Participates actively in the response to hyperosmotic and heat shock by preventing the aggregation of stress-denatured proteins, in association with DnaK and GrpE. It is the nucleotide exchange factor for DnaK and may function as a thermosensor. Unfolded proteins bind initially to DnaJ; upon interaction with the DnaJ-bound protein, DnaK hydrolyzes its bound ATP, resulting in the formation of a stable complex. GrpE releases ADP from DnaK; ATP binding to DnaK triggers the release of the substrate protein, thus completing the reaction cycle. Several rounds of ATP-dependent interactions between DnaJ, DnaK and GrpE are required for fully efficient folding. In Neisseria gonorrhoeae (strain ATCC 700825 / FA 1090), this protein is Protein GrpE.